Reading from the N-terminus, the 214-residue chain is Adenylate kinase (214 aa).

10 to 15 (GAGKGT) serves as a coordination point for ATP. The tract at residues 30 to 59 (STGDMLRAAIKAGTELGKQAKAVIDAGQLV) is NMP. AMP-binding positions include Thr31, Arg36, 57–59 (QLV), 85–88 (GFPR), and Gln92. Residues 122-159 (GRRAHLPSGRTYHVVYNPPKVEGKDDVTGEDLVVRDDD) form an LID region. ATP contacts are provided by residues Arg123 and 132-133 (TY). Residues Arg156 and Arg167 each contribute to the AMP site. Lys200 serves as a coordination point for ATP.

It belongs to the adenylate kinase family. As to quaternary structure, monomer.

Its subcellular location is the cytoplasm. It catalyses the reaction AMP + ATP = 2 ADP. Its pathway is purine metabolism; AMP biosynthesis via salvage pathway; AMP from ADP: step 1/1. Functionally, catalyzes the reversible transfer of the terminal phosphate group between ATP and AMP. Plays an important role in cellular energy homeostasis and in adenine nucleotide metabolism. This is Adenylate kinase from Vibrio campbellii (strain ATCC BAA-1116).